A 165-amino-acid chain; its full sequence is Lipoprotein signal peptidase (165 aa).

The next 5 membrane-spanning stretches (helical) occupy residues 10–30 (LKWL…KYWV), 42–62 (VLPG…GLFT), 71–91 (LFVW…YKLI), 105–125 (IGGA…VDFI), and 133–153 (HWPT…IVTI). Active-site residues include Asp123 and Asp141.

The protein belongs to the peptidase A8 family.

It is found in the cell inner membrane. It catalyses the reaction Release of signal peptides from bacterial membrane prolipoproteins. Hydrolyzes -Xaa-Yaa-Zaa-|-(S,diacylglyceryl)Cys-, in which Xaa is hydrophobic (preferably Leu), and Yaa (Ala or Ser) and Zaa (Gly or Ala) have small, neutral side chains.. The protein operates within protein modification; lipoprotein biosynthesis (signal peptide cleavage). Functionally, this protein specifically catalyzes the removal of signal peptides from prolipoproteins. This Blochmanniella pennsylvanica (strain BPEN) protein is Lipoprotein signal peptidase.